Here is a 263-residue protein sequence, read N- to C-terminus: Expansin-like A3 (263 aa).

The N-terminal stretch at 1–20 (MRSFLYLIVVIFLFSSSVNA) is a signal peptide. Residues 41–147 (SGACAYGPMA…QRVPCNYGKR (107 aa)) form the Expansin-like EG45 domain. N-linked (GlcNAc...) asparagine glycosylation is found at asparagine 99 and asparagine 102. Residues 161-243 (NYLAIKLLYQ…NWNSGRIYDA (83 aa)) enclose the Expansin-like CBD domain.

Belongs to the expansin family. Expansin-like A subfamily.

The protein resides in the secreted. The polypeptide is Expansin-like A3 (EXLA3) (Arabidopsis thaliana (Mouse-ear cress)).